A 289-amino-acid chain; its full sequence is Serine/threonine-protein phosphatase Pgam5, mitochondrial (289 aa).

The chain crosses the membrane as a helical span at residues 7–23; that stretch reads FVCGTGAGLAVYYLQRL.

This sequence belongs to the phosphoglycerate mutase family. BPG-dependent PGAM subfamily. As to quaternary structure, interacts with Pk92B/ASK1.

The protein localises to the mitochondrion outer membrane. It catalyses the reaction O-phospho-L-seryl-[protein] + H2O = L-seryl-[protein] + phosphate. The catalysed reaction is O-phospho-L-threonyl-[protein] + H2O = L-threonyl-[protein] + phosphate. Its function is as follows. Displays phosphatase activity for serine/threonine residues, and dephosphorylates and activates Pk92B kinase. Has apparently no phosphoglycerate mutase activity. The protein is Serine/threonine-protein phosphatase Pgam5, mitochondrial of Drosophila erecta (Fruit fly).